Consider the following 943-residue polypeptide: Isoleucine--tRNA ligase (943 aa).

Positions 58 to 68 (PYANGNIHIGH) match the 'HIGH' region motif. E567 serves as a coordination point for L-isoleucyl-5'-AMP. Residues 608–612 (KMSKS) carry the 'KMSKS' region motif. K611 is an ATP binding site. Zn(2+) contacts are provided by C906, C909, C926, and C929.

This sequence belongs to the class-I aminoacyl-tRNA synthetase family. IleS type 1 subfamily. In terms of assembly, monomer. Zn(2+) serves as cofactor.

Its subcellular location is the cytoplasm. The catalysed reaction is tRNA(Ile) + L-isoleucine + ATP = L-isoleucyl-tRNA(Ile) + AMP + diphosphate. Catalyzes the attachment of isoleucine to tRNA(Ile). As IleRS can inadvertently accommodate and process structurally similar amino acids such as valine, to avoid such errors it has two additional distinct tRNA(Ile)-dependent editing activities. One activity is designated as 'pretransfer' editing and involves the hydrolysis of activated Val-AMP. The other activity is designated 'posttransfer' editing and involves deacylation of mischarged Val-tRNA(Ile). The sequence is that of Isoleucine--tRNA ligase from Pseudomonas savastanoi pv. phaseolicola (strain 1448A / Race 6) (Pseudomonas syringae pv. phaseolicola (strain 1448A / Race 6)).